The following is a 291-amino-acid chain: Glycine--tRNA ligase alpha subunit (291 aa).

The protein belongs to the class-II aminoacyl-tRNA synthetase family. As to quaternary structure, tetramer of two alpha and two beta subunits.

The protein localises to the cytoplasm. It carries out the reaction tRNA(Gly) + glycine + ATP = glycyl-tRNA(Gly) + AMP + diphosphate. The polypeptide is Glycine--tRNA ligase alpha subunit (Geobacter metallireducens (strain ATCC 53774 / DSM 7210 / GS-15)).